An 827-amino-acid polypeptide reads, in one-letter code: Glycerol-3-phosphate acyltransferase (827 aa).

The HXXXXD motif motif lies at 325 to 330 (CHRSHM).

Belongs to the GPAT/DAPAT family.

Its subcellular location is the cell inner membrane. It catalyses the reaction sn-glycerol 3-phosphate + an acyl-CoA = a 1-acyl-sn-glycero-3-phosphate + CoA. The protein operates within phospholipid metabolism; CDP-diacylglycerol biosynthesis; CDP-diacylglycerol from sn-glycerol 3-phosphate: step 1/3. This is Glycerol-3-phosphate acyltransferase from Shigella dysenteriae serotype 1 (strain Sd197).